We begin with the raw amino-acid sequence, 824 residues long: U-box domain-containing protein 24 (824 aa).

Residues 13–92 (GAFEAFVCPL…HEWRARNEEK (80 aa)) form the U-box domain. ARM repeat units lie at residues 133–172 (AASK…VLVE), 175–214 (DDNK…ELSG), 217–258 (PTCE…NLDR), 260–299 (DANV…ELAL), 300–339 (ANDD…EISS), 341–385 (EASA…NLVA), 396–435 (DDDE…PAIG), 441–481 (VLAG…DIRV), and 486–525 (LLRN…EEQA).

Interacts with BZR1, BZR2, BZR3 and GSK2. Post-translationally, auto-ubiquitinated. In terms of processing, phosphorylated by GSK2. Phosphorylation of PUB24 increases its cellular stability.

Its subcellular location is the cytoplasm. It localises to the cytosol. The protein resides in the nucleus. The catalysed reaction is S-ubiquitinyl-[E2 ubiquitin-conjugating enzyme]-L-cysteine + [acceptor protein]-L-lysine = [E2 ubiquitin-conjugating enzyme]-L-cysteine + N(6)-ubiquitinyl-[acceptor protein]-L-lysine.. The protein operates within protein modification; protein ubiquitination. Functionally, E3 ubiquitin-protein ligase that functions as a negative regulator of brassinosteroid (BR) signaling. Targets BZR1, a positive regulator of BR signaling pathway, and promotes its degradation via the ubiquitin-26S proteasome pathway. The chain is U-box domain-containing protein 24 from Oryza sativa subsp. japonica (Rice).